Consider the following 1399-residue polypeptide: DNA-directed RNA polymerase subunit beta' (1399 aa).

The Zn(2+) site is built by C71, C73, C86, and C89. Mg(2+)-binding residues include D462, D464, and D466. 4 residues coordinate Zn(2+): C810, C884, C891, and C894. Positions 1379 to 1399 (KQAAIVPSQPEPQPLALPPAE) are disordered. Residues 1387 to 1399 (QPEPQPLALPPAE) show a composition bias toward pro residues.

The protein belongs to the RNA polymerase beta' chain family. In terms of assembly, the RNAP catalytic core consists of 2 alpha, 1 beta, 1 beta' and 1 omega subunit. When a sigma factor is associated with the core the holoenzyme is formed, which can initiate transcription. It depends on Mg(2+) as a cofactor. The cofactor is Zn(2+).

The enzyme catalyses RNA(n) + a ribonucleoside 5'-triphosphate = RNA(n+1) + diphosphate. Functionally, DNA-dependent RNA polymerase catalyzes the transcription of DNA into RNA using the four ribonucleoside triphosphates as substrates. The protein is DNA-directed RNA polymerase subunit beta' of Bradyrhizobium sp. (strain ORS 278).